Reading from the N-terminus, the 552-residue chain is MYCERFICILRILGTTLFGVSLLLGITAAYIVGYQFIQTDNYYFSFGLYGAILASHLIIQSLFAYLEHRKMKRSLETPIKLNKTVALCIAAYQEDPDYLRKCLLSVKRLTYPGIKVVMVIDGNSEDDVYMMDIFTEIMGRDKSATYIWSNNFHDKGPGETEESHRESMQHVSQLVLSNKSVCIMQKWGGKREVMYTAFKALGEAWNYVQVCDSDTMLDPASSVEMVKVLEEDPMVGGVGGDVQILNKYDSWISFLSSVRYWMAFNIERACQSYFGCVQCISGPLGMYRNSLLHEFVEDWYNQEFMGSQCSFGDDRHLTNRVLSLGYATKYTARSKCLTETPIEYLRWLNQQTRWSKSYFREWLYNAMWFHKHHLWMTYEAVITGFFPFFLIATVIQLFYRGKIWNILLFLLTVQLVGLIKSSFASFLRGNIVMVFMSLYSVLYMSSLLPAKMFAIATINKAGWGTSGRKTIVVNFIGLIPVSIWFTILLGRVIFTIYKESKKPFSESKTTVLVIGTILYACYWVLLLTLYLVLITKCGRRKKEQHYDMVLDV.

Residues M1–R11 lie on the Cytoplasmic side of the membrane. A helical transmembrane segment spans residues I12 to V32. The Extracellular portion of the chain corresponds to G33–S45. The chain crosses the membrane as a helical span at residues F46 to L66. The Cytoplasmic segment spans residues E67 to L374. The helical transmembrane segment at W375–I395 threads the bilayer. At Q396–K402 the chain is on the extracellular side. A helical membrane pass occupies residues I403–F423. Over A424–G429 the chain is Cytoplasmic. A helical transmembrane segment spans residues N430–A450. Topologically, residues K451–F475 are extracellular. A helical membrane pass occupies residues I476–I496. Topologically, residues Y497–T510 are cytoplasmic. A helical transmembrane segment spans residues V511–L531. Topologically, residues V532–V552 are extracellular.

Belongs to the NodC/HAS family. In terms of assembly, homodimer; dimerization promotes enzymatic activity. It depends on Mg(2+) as a cofactor.

The protein localises to the cell membrane. The protein resides in the endoplasmic reticulum membrane. It localises to the vesicle. Its subcellular location is the golgi apparatus membrane. It is found in the lysosome. It catalyses the reaction [hyaluronan](n) + UDP-N-acetyl-alpha-D-glucosamine = N-acetyl-beta-D-glucosaminyl-(1-&gt;4)-[hyaluronan](n) + UDP + H(+). The catalysed reaction is N-acetyl-beta-D-glucosaminyl-(1-&gt;4)-[hyaluronan](n) + UDP-alpha-D-glucuronate = [hyaluronan](n+1) + UDP + H(+). It participates in glycan biosynthesis; hyaluronan biosynthesis. Catalyzes the addition of GlcNAc or GlcUA monosaccharides to the nascent hyaluronan polymer. Therefore, it is essential to hyaluronan synthesis a major component of most extracellular matrices that has a structural role in tissues architectures and regulates cell adhesion, migration and differentiation. This is one of three isoenzymes responsible for cellular hyaluronan synthesis and it is particularly responsible for the synthesis of high molecular mass hyaluronan. The sequence is that of Hyaluronan synthase 2 (HAS2) from Gallus gallus (Chicken).